The sequence spans 151 residues: Transcriptional regulator MraZ (151 aa).

SpoVT-AbrB domains follow at residues 5 to 56 (THRH…PLPT) and 85 to 128 (SEEL…DAAR).

This sequence belongs to the MraZ family. Forms oligomers.

The protein resides in the cytoplasm. It is found in the nucleoid. In Acidithiobacillus ferrooxidans (strain ATCC 23270 / DSM 14882 / CIP 104768 / NCIMB 8455) (Ferrobacillus ferrooxidans (strain ATCC 23270)), this protein is Transcriptional regulator MraZ.